The following is a 63-amino-acid chain: LECYRCGVSGCHLRTTCSAKEKFCAKQHNRISTLWWHGCVETCTEDETWKFYRKCCTTNLCNI.

5 cysteine pairs are disulfide-bonded: cysteine 3/cysteine 24, cysteine 6/cysteine 11, cysteine 17/cysteine 39, cysteine 43/cysteine 55, and cysteine 56/cysteine 61.

The protein belongs to the three-finger toxin family. Ancestral subfamily. Orphan group XIX sub-subfamily. Expressed by the venom gland.

It localises to the secreted. May enhance presynaptic acetylcholine release. The sequence is that of Toxin S6C6 from Dendroaspis jamesoni kaimosae (Eastern Jameson's mamba).